The sequence spans 205 residues: Peroxynitrite isomerase (205 aa).

The interval 1–23 is disordered; that stretch reads MTEPDPAAAEQRPSVGRNLPTFQ. Positions 52-58 match the GXWXGXG motif; that stretch reads GVWRGEG. Positions 63, 168, and 195 each coordinate heme b.

The protein belongs to the nitrobindin family. Homodimer. The cofactor is heme b.

The catalysed reaction is peroxynitrite = nitrate. Its pathway is nitrogen metabolism. Its function is as follows. Heme-binding protein able to scavenge peroxynitrite and to protect free L-tyrosine against peroxynitrite-mediated nitration, by acting as a peroxynitrite isomerase that converts peroxynitrite to nitrate. Therefore, this protein likely plays a role in peroxynitrite sensing and in the detoxification of reactive nitrogen and oxygen species (RNS and ROS, respectively). Is able to bind nitric oxide (NO) in vitro, but may act as a sensor of peroxynitrite levels in vivo. This Mycobacteroides abscessus (strain ATCC 19977 / DSM 44196 / CCUG 20993 / CIP 104536 / JCM 13569 / NCTC 13031 / TMC 1543 / L948) (Mycobacterium abscessus) protein is Peroxynitrite isomerase.